The following is a 300-amino-acid chain: Cyclic nucleotide synthase CdnE01 (300 aa).

Mg(2+) contacts are provided by Asp-63, Asp-65, and Asp-137.

The protein belongs to the CD-NTase family. E01 subfamily. It depends on Mg(2+) as a cofactor.

Its activity is regulated as follows. Binds to and probably activated by a virus-derived, approximately 400 nucleotide RNA (called CBASS-activating bacteriophage RNA, cabRNA) that begins in the viral terminase subunit terS and extends into terL, as well as by a shorter RNA with part of the cabRNA sequence able to form a hairpin. RNA secondary and/or tertiary structure, as well as viral infection itself, are important for CdnE activation. In terms of biological role, cyclic nucleotide synthase (second messenger synthase) of a CBASS antivirus system. CBASS (cyclic oligonucleotide-based antiphage signaling system) provides immunity against bacteriophage. The CD-NTase protein synthesizes cyclic nucleotides in response to infection; these serve as specific second messenger signals. The signals activate a diverse range of effectors, leading to bacterial cell death and thus abortive phage infection. A type I-B CBASS system. Its function is as follows. Protects S.aureus against phage infection. When the CBASS operon (cdnE and the following gene) is introduced in S.aureus strain RN4220 there is strong protection against lytic DNA phages 80alpha-vir and phi-NM1-gamma-6 but little to no protection against phages phi-NM4-gamma-4 or phi-12-gamma-3. In Staphylococcus haemolyticus, this protein is Cyclic nucleotide synthase CdnE01.